Consider the following 161-residue polypeptide: Phosphopantetheine adenylyltransferase (161 aa).

S8 is a substrate binding site. ATP-binding positions include 8–9 (SF) and H16. Residues 36-40 (ENPRK), L72, and R86 contribute to the substrate site. Residues 87-89 (GLR), E97, and 122-128 (FSFISSS) contribute to the ATP site. A substrate-binding site is contributed by E132.

Belongs to the bacterial CoaD family. In terms of assembly, homohexamer. Requires Mg(2+) as cofactor.

It is found in the cytoplasm. The catalysed reaction is (R)-4'-phosphopantetheine + ATP + H(+) = 3'-dephospho-CoA + diphosphate. Its pathway is cofactor biosynthesis; coenzyme A biosynthesis; CoA from (R)-pantothenate: step 4/5. In terms of biological role, reversibly transfers an adenylyl group from ATP to 4'-phosphopantetheine, yielding dephospho-CoA (dPCoA) and pyrophosphate. The polypeptide is Phosphopantetheine adenylyltransferase (Thermotoga maritima (strain ATCC 43589 / DSM 3109 / JCM 10099 / NBRC 100826 / MSB8)).